A 633-amino-acid chain; its full sequence is Proline-rich protein LAS17 (633 aa).

The region spanning 16–127 (LPKASNKIID…KRVQKRERYA (112 aa)) is the WH1 domain. 2 disordered regions span residues 145 to 545 (REEQ…TTGD) and 563 to 606 (ALRK…PASL). The segment covering 192–215 (AETFDSDQTSSFSDINSTTASAPT) has biased composition (low complexity). Composition is skewed to pro residues over residues 216-225 (TPAPALPPAS) and 238-256 (SLPP…PQHN). Low complexity-rich tracts occupy residues 257-269 (SPPQ…QPQS) and 307-322 (PQQN…RNNR). A Phosphothreonine modification is found at threonine 334. Serine 337 is subject to Phosphoserine. Positions 342–357 (PAPPPPPRRGPAPPPP) are enriched in pro residues. Composition is skewed to polar residues over residues 363–376 (TSNT…NSLL), 399–414 (NVTM…NSNR), and 454–465 (PQNTQAPSQATN). The span at 479–488 (QSQIPQSAPS) shows a compositional bias: low complexity. Residues 547–567 (GRDALLASIRGAGGIGALRKV) form the WH2 domain. Serine 588 carries the phosphoserine modification.

As to quaternary structure, interacts with KRE6, LSB3, LSB5 and YSC84.

The protein is Proline-rich protein LAS17 (LAS17) of Saccharomyces cerevisiae (strain ATCC 204508 / S288c) (Baker's yeast).